A 355-amino-acid polypeptide reads, in one-letter code: UDP-3-O-acylglucosamine N-acyltransferase (355 aa).

H246 functions as the Proton acceptor in the catalytic mechanism.

This sequence belongs to the transferase hexapeptide repeat family. LpxD subfamily. Homotrimer.

It carries out the reaction a UDP-3-O-[(3R)-3-hydroxyacyl]-alpha-D-glucosamine + a (3R)-hydroxyacyl-[ACP] = a UDP-2-N,3-O-bis[(3R)-3-hydroxyacyl]-alpha-D-glucosamine + holo-[ACP] + H(+). It functions in the pathway bacterial outer membrane biogenesis; LPS lipid A biosynthesis. Functionally, catalyzes the N-acylation of UDP-3-O-acylglucosamine using 3-hydroxyacyl-ACP as the acyl donor. Is involved in the biosynthesis of lipid A, a phosphorylated glycolipid that anchors the lipopolysaccharide to the outer membrane of the cell. The chain is UDP-3-O-acylglucosamine N-acyltransferase from Polaromonas naphthalenivorans (strain CJ2).